The chain runs to 298 residues: tRNA dimethylallyltransferase 2 (298 aa).

10-17 is a binding site for ATP; it reads GPTASGKT. Substrate is bound at residue 12-17; that stretch reads TASGKT. The segment at 35–38 is interaction with substrate tRNA; that stretch reads DSRQ.

It belongs to the IPP transferase family. Monomer. It depends on Mg(2+) as a cofactor.

It carries out the reaction adenosine(37) in tRNA + dimethylallyl diphosphate = N(6)-dimethylallyladenosine(37) in tRNA + diphosphate. Functionally, catalyzes the transfer of a dimethylallyl group onto the adenine at position 37 in tRNAs that read codons beginning with uridine, leading to the formation of N6-(dimethylallyl)adenosine (i(6)A). This Syntrophotalea carbinolica (strain DSM 2380 / NBRC 103641 / GraBd1) (Pelobacter carbinolicus) protein is tRNA dimethylallyltransferase 2.